A 216-amino-acid polypeptide reads, in one-letter code: Probable Golgi SNAP receptor complex member 2 (216 aa).

At 1–194 (MESLYHQTNN…IERRLVEDRR (194 aa)) the chain is on the cytoplasmic side. Residues 62–103 (QRQSSKLRVDQLKYDLRHLQTSLQTARERRQRRMQEISEREQ) are a coiled coil. The chain crosses the membrane as a helical; Anchor for type IV membrane protein span at residues 195 to 215 (IFIGGVVVTLLIIALIIYFLV). A topological domain (vesicular) is located at residue Leu216.

This sequence belongs to the GOSR2 family. As to quaternary structure, part of a unique SNARE complex.

Its subcellular location is the golgi apparatus. It localises to the cis-Golgi network membrane. It is found in the golgi apparatus membrane. The protein localises to the endoplasmic reticulum membrane. Functionally, involved in transport of proteins from the cis/medial-Golgi to the trans-Golgi network. The protein is Probable Golgi SNAP receptor complex member 2 of Drosophila melanogaster (Fruit fly).